A 300-amino-acid chain; its full sequence is Transmembrane protein 158 (300 aa).

The first 20 residues, 1–20 (MLPLLAALLAAACPLPPVRG), serve as a signal peptide directing secretion. The N-linked (GlcNAc...) asparagine glycan is linked to N75. 2 consecutive transmembrane segments (helical) span residues 231–251 (LVIV…IAGF) and 273–293 (VPAG…AAAV).

The protein belongs to the TMEM158 family. In terms of processing, N-glycosylated.

It is found in the membrane. Functionally, receptor for brain injury-derived neurotrophic peptide (BINP), a synthetic 13-mer peptide. The protein is Transmembrane protein 158 (TMEM158) of Homo sapiens (Human).